The sequence spans 162 residues: Ribosomal RNA large subunit methyltransferase H (162 aa).

S-adenosyl-L-methionine is bound by residues Leu-78 and Gly-110.

The protein belongs to the RNA methyltransferase RlmH family. In terms of assembly, homodimer.

Its subcellular location is the cytoplasm. It carries out the reaction pseudouridine(1915) in 23S rRNA + S-adenosyl-L-methionine = N(3)-methylpseudouridine(1915) in 23S rRNA + S-adenosyl-L-homocysteine + H(+). Specifically methylates the pseudouridine at position 1915 (m3Psi1915) in 23S rRNA. The chain is Ribosomal RNA large subunit methyltransferase H from Bradyrhizobium sp. (strain ORS 278).